The chain runs to 225 residues: ATP synthase subunit a (225 aa).

5 helical membrane-spanning segments follow: residues 16–36 (LFVY…VAKL), 79–99 (LVAT…IPGF), 105–125 (SLNL…FEGI), 176–196 (LFLL…AYAL), and 202–222 (VLQT…AVAI).

This sequence belongs to the ATPase A chain family. In terms of assembly, F-type ATPases have 2 components, CF(1) - the catalytic core - and CF(0) - the membrane proton channel. CF(1) has five subunits: alpha(3), beta(3), gamma(1), delta(1), epsilon(1). CF(0) has three main subunits: a(1), b(2) and c(9-12). The alpha and beta chains form an alternating ring which encloses part of the gamma chain. CF(1) is attached to CF(0) by a central stalk formed by the gamma and epsilon chains, while a peripheral stalk is formed by the delta and b chains.

The protein resides in the cell inner membrane. Its function is as follows. Key component of the proton channel; it plays a direct role in the translocation of protons across the membrane. In Campylobacter curvus (strain 525.92), this protein is ATP synthase subunit a.